A 669-amino-acid polypeptide reads, in one-letter code: Putative heme-binding protein rrnAC3100 (669 aa).

A heme-binding site is contributed by H181. Disordered regions lie at residues 260–351 (RVPT…PDVS) and 451–477 (LGGSLGEGVEGSETADDSDAQAAESSQ). Residues 579-667 (GTMGMFYTVK…VLADRPRHVF (89 aa)) enclose the ABM domain.

It in the N-terminal section; belongs to the ChdC family.

In Haloarcula marismortui (strain ATCC 43049 / DSM 3752 / JCM 8966 / VKM B-1809) (Halobacterium marismortui), this protein is Putative heme-binding protein rrnAC3100.